A 396-amino-acid chain; its full sequence is Ribosomal RNA large subunit methyltransferase I (396 aa).

The region spanning 2-81 (SVRLVLAKGR…ESIDIAFFTR (80 aa)) is the PUA domain.

The protein belongs to the methyltransferase superfamily. RlmI family.

It localises to the cytoplasm. It catalyses the reaction cytidine(1962) in 23S rRNA + S-adenosyl-L-methionine = 5-methylcytidine(1962) in 23S rRNA + S-adenosyl-L-homocysteine + H(+). Specifically methylates the cytosine at position 1962 (m5C1962) of 23S rRNA. The chain is Ribosomal RNA large subunit methyltransferase I from Escherichia coli O127:H6 (strain E2348/69 / EPEC).